We begin with the raw amino-acid sequence, 262 residues long: Adenosylcobinamide-GDP ribazoletransferase (262 aa).

6 consecutive transmembrane segments (helical) span residues 43-63 (YFGLVGLLVGLLSAIVFWLTQ), 66-86 (LPAGVSVLLAMLVGVLLTGGF), 120-140 (GALALMLALLLKWQLLVELAL), 146-166 (AGSALIVAHTVSRVVSASIIF), 191-211 (LLILIASGVLVLLFLKGLAAL), and 242-262 (AAQQIAEIVCYFVLLVVGNIL).

This sequence belongs to the CobS family. The cofactor is Mg(2+).

Its subcellular location is the cell inner membrane. The catalysed reaction is alpha-ribazole + adenosylcob(III)inamide-GDP = adenosylcob(III)alamin + GMP + H(+). It carries out the reaction alpha-ribazole 5'-phosphate + adenosylcob(III)inamide-GDP = adenosylcob(III)alamin 5'-phosphate + GMP + H(+). The protein operates within cofactor biosynthesis; adenosylcobalamin biosynthesis; adenosylcobalamin from cob(II)yrinate a,c-diamide: step 7/7. In terms of biological role, joins adenosylcobinamide-GDP and alpha-ribazole to generate adenosylcobalamin (Ado-cobalamin). Also synthesizes adenosylcobalamin 5'-phosphate from adenosylcobinamide-GDP and alpha-ribazole 5'-phosphate. The sequence is that of Adenosylcobinamide-GDP ribazoletransferase from Shewanella baltica (strain OS195).